The following is a 310-amino-acid chain: MRLISKVLVKTNCLEVGMRRAPQWYSHYSTTAGNARVNKKGSKVVPVLTGLALASIFAKKWYDDSQIKKADATSVAVDASISAFPKKMGPPQWPFSTQYELIGKGVRCVSSITFKAYGLGIYVAAEDKHLVSEVLDSKFLSQAFIDTAAPPSPENSHQDNLRAALNDPAKAPILINNLLDSGIRLMSKNTPIKAGSFKLLMDGTKKSVLKNPDSQSQDKDRLEAGFQELHDCFRSVKGLVARDDDFFIELNKDCSMNLSYYARKKDEFVILGTVKEPLIGKLLFAHYLAAVDPPSPEARKEVIDALVSLS.

A mitochondrion-targeting transit peptide spans 1-20 (MRLISKVLVKTNCLEVGMRR).

This sequence belongs to the AIM18/AIM46 family.

It is found in the mitochondrion. This chain is Altered inheritance of mitochondria protein 46, mitochondrial (AIM46), found in Saccharomyces cerevisiae (strain RM11-1a) (Baker's yeast).